Here is a 380-residue protein sequence, read N- to C-terminus: Guanine nucleotide-binding protein alpha-1 subunit (380 aa).

A disordered region spans residues 1-25 (MGSSCSRSHSLSEAETTKNAKSADI). Gly2 is lipidated: N-myristoyl glycine. A lipid anchor (S-palmitoyl cysteine) is attached at Cys5. The segment covering 10–25 (SLSEAETTKNAKSADI) has biased composition (basic and acidic residues). The region spanning 38–380 (HIHKLLLLGA…ESMRRSREGT (343 aa)) is the G-alpha domain. A G1 motif region spans residues 41-54 (KLLLLGAGESGKST). Glu49, Ser50, Gly51, Lys52, Ser53, Thr54, Asp163, Leu188, Tyr189, Thr194, Gly222, Asn288, Lys289, Asp291, and Ala356 together coordinate GTP. A Mg(2+)-binding site is contributed by Ser53. Residues 186–194 (DVLYARVRT) form a G2 motif region. Mg(2+) is bound at residue Thr194. Positions 215–224 (YRLYDVGGQR) are G3 motif. The segment at 284-291 (ILFLNKFD) is G4 motif. The interval 354–359 (TTALDQ) is G5 motif.

This sequence belongs to the G-alpha family. As to quaternary structure, g proteins are composed of 3 units; alpha, beta and gamma. The alpha chain contains the guanine nucleotide binding site. Interacts with COLD1. It depends on Mg(2+) as a cofactor.

The protein resides in the cell membrane. Functionally, guanine nucleotide-binding proteins (G proteins) are involved as modulators or transducers in various transmembrane signaling systems. May function in a signal transduction pathway required for normal growth and development of internodes, leaves, panicles and seeds. Involved in gibberellin signal transduction. Involved in R gene-mediated disease resistance. Functions upstream of the small GTPase RAC1 in the early steps of signaling. Involved in brassinosteroid response. May not be a signaling molecule in BRI1-mediated perception or transduction. The polypeptide is Guanine nucleotide-binding protein alpha-1 subunit (GPA1) (Oryza sativa subsp. indica (Rice)).